Reading from the N-terminus, the 260-residue chain is Uridylate kinase (260 aa).

Residue 29–32 participates in ATP binding; that stretch reads KLSG. Residues 37-42 form an involved in allosteric activation by GTP region; the sequence is GDLGYG. UMP is bound at residue Gly71. ATP contacts are provided by Gly72 and Arg76. Residues Asp91 and 152–159 each bind UMP; that span reads SGNPFFTT. Positions 179, 185, and 188 each coordinate ATP.

It belongs to the UMP kinase family. In terms of assembly, homohexamer.

The protein localises to the cytoplasm. The catalysed reaction is UMP + ATP = UDP + ADP. It participates in pyrimidine metabolism; CTP biosynthesis via de novo pathway; UDP from UMP (UMPK route): step 1/1. Allosterically activated by GTP. Inhibited by UTP. Its function is as follows. Catalyzes the reversible phosphorylation of UMP to UDP. In Synechocystis sp. (strain ATCC 27184 / PCC 6803 / Kazusa), this protein is Uridylate kinase.